The chain runs to 377 residues: uncharacterized protein (377 aa).

Residues 345–377 (VGPSPPAYEQVARSSPTDIPLPPPSCPTNVQRD) form a disordered region.

This is an uncharacterized protein from Schizosaccharomyces pombe (strain 972 / ATCC 24843) (Fission yeast).